We begin with the raw amino-acid sequence, 442 residues long: Adenylosuccinate synthetase (442 aa).

GTP contacts are provided by residues 30–36 (GDEGKGK) and 58–60 (GHT). D31 (proton acceptor) is an active-site residue. Mg(2+)-binding residues include D31 and G58. IMP is bound by residues 31–34 (DEGK), 56–59 (NAGH), T148, R162, N241, T256, and R320. Residue H59 is the Proton donor of the active site. Residue 316-322 (TTTGRRR) participates in substrate binding. GTP contacts are provided by residues R322, 348 to 350 (KLD), and 430 to 432 (GVG).

Belongs to the adenylosuccinate synthetase family. In terms of assembly, homodimer. Mg(2+) is required as a cofactor.

Its subcellular location is the cytoplasm. It carries out the reaction IMP + L-aspartate + GTP = N(6)-(1,2-dicarboxyethyl)-AMP + GDP + phosphate + 2 H(+). The protein operates within purine metabolism; AMP biosynthesis via de novo pathway; AMP from IMP: step 1/2. Functionally, plays an important role in the de novo pathway and in the salvage pathway of purine nucleotide biosynthesis. Catalyzes the first committed step in the biosynthesis of AMP from IMP. The chain is Adenylosuccinate synthetase from Trichoplax adhaerens (Trichoplax reptans).